Consider the following 377-residue polypeptide: 3-(aryl)acrylate reductase (377 aa).

FAD contacts are provided by residues 121-130 (FALTEPGAGS), 154-156 (FIT), R266, Q277, and 334-338 (QIHGG). The active-site Proton acceptor is the E361. FAD is bound at residue 363 to 365 (TSE).

It belongs to the acyl-CoA dehydrogenase family. The cofactor is FAD.

The catalysed reaction is 3-phenylpropanoate + oxidized [electron-transfer flavoprotein] + H(+) = (E)-cinnamate + reduced [electron-transfer flavoprotein]. It catalyses the reaction phloretate + oxidized [electron-transfer flavoprotein] + H(+) = (E)-4-coumarate + reduced [electron-transfer flavoprotein]. It carries out the reaction indole-3-propanoate + oxidized [electron-transfer flavoprotein] + H(+) = (E)-3-(indol-3-yl)acrylate + reduced [electron-transfer flavoprotein]. It functions in the pathway amino-acid degradation. In terms of biological role, essential for the reductive metabolism of L-phenylalanine, L-tyrosine and L-tryptophan. Catalyzes the reduction of phenylacrylic acid to phenylpropionic acid, 4-hydroxy-phenylacrylic acid to 4-hydroxy-phenylpropionic acid, and indoleacrylic acid to indolepropionic acid. This is 3-(aryl)acrylate reductase from Clostridium sporogenes (strain ATCC 15579).